We begin with the raw amino-acid sequence, 155 residues long: Deoxyuridine 5'-triphosphate nucleotidohydrolase (155 aa).

Residues 74–76 (RSG), Asn87, and 91–93 (LID) contribute to the substrate site.

It belongs to the dUTPase family. Requires Mg(2+) as cofactor.

The catalysed reaction is dUTP + H2O = dUMP + diphosphate + H(+). The protein operates within pyrimidine metabolism; dUMP biosynthesis; dUMP from dCTP (dUTP route): step 2/2. Functionally, this enzyme is involved in nucleotide metabolism: it produces dUMP, the immediate precursor of thymidine nucleotides and it decreases the intracellular concentration of dUTP so that uracil cannot be incorporated into DNA. This Xylella fastidiosa (strain M23) protein is Deoxyuridine 5'-triphosphate nucleotidohydrolase.